An 87-amino-acid polypeptide reads, in one-letter code: Antitoxin YefM (87 aa).

Belongs to the phD/YefM antitoxin family. As to quaternary structure, forms a complex with YoeB which inhibits its toxin activity.

Antitoxin component of a type II toxin-antitoxin (TA) system. A probable antitoxin for the putative mRNA interferase YeoB. This is Antitoxin YefM from Streptomyces coelicolor (strain ATCC BAA-471 / A3(2) / M145).